We begin with the raw amino-acid sequence, 542 residues long: Chaperonin GroEL (542 aa).

ATP contacts are provided by residues 29 to 32, 86 to 90, Gly-413, 476 to 478, and Asp-492; these read TLGP, DGTTT, and NAA. The tract at residues 523-542 is disordered; it reads EPAAPAMPGGMDPSMMGGMM. Residues 526-542 are compositionally biased toward low complexity; sequence APAMPGGMDPSMMGGMM.

It belongs to the chaperonin (HSP60) family. In terms of assembly, forms a cylinder of 14 subunits composed of two heptameric rings stacked back-to-back. Interacts with the co-chaperonin GroES.

It localises to the cytoplasm. It carries out the reaction ATP + H2O + a folded polypeptide = ADP + phosphate + an unfolded polypeptide.. Functionally, together with its co-chaperonin GroES, plays an essential role in assisting protein folding. The GroEL-GroES system forms a nano-cage that allows encapsulation of the non-native substrate proteins and provides a physical environment optimized to promote and accelerate protein folding. The chain is Chaperonin GroEL from Streptococcus uberis (strain ATCC BAA-854 / 0140J).